Here is a 241-residue protein sequence, read N- to C-terminus: Acetoacetyl-CoA reductase (241 aa).

NADP(+) is bound by residues 12–14 (RGI) and 82–86 (NAGIT). Substrate is bound by residues aspartate 88 and 141–144 (QMGQ). The Proton acceptor role is filled by tyrosine 147. 177 to 180 (PGYI) is a binding site for NADP(+). Residue 178 to 179 (GY) participates in substrate binding.

Belongs to the short-chain dehydrogenases/reductases (SDR) family.

Its subcellular location is the cytoplasm. It carries out the reaction a (3R)-3-hydroxyacyl-CoA + NADP(+) = a 3-oxoacyl-CoA + NADPH + H(+). The protein operates within biopolymer metabolism; poly-(R)-3-hydroxybutanoate biosynthesis. The polypeptide is Acetoacetyl-CoA reductase (Shinella zoogloeoides (Crabtreella saccharophila)).